The following is a 394-amino-acid chain: 8-amino-7-oxononanoate synthase (394 aa).

Arg-21 contacts substrate. 112–113 (GY) lines the pyridoxal 5'-phosphate pocket. Position 137 (His-137) interacts with substrate. Pyridoxal 5'-phosphate is bound by residues Ser-183, His-211, and Thr-239. At Lys-242 the chain carries N6-(pyridoxal phosphate)lysine. Residue Thr-358 participates in substrate binding.

It belongs to the class-II pyridoxal-phosphate-dependent aminotransferase family. BioF subfamily. In terms of assembly, homodimer. Pyridoxal 5'-phosphate is required as a cofactor.

It carries out the reaction 6-carboxyhexanoyl-[ACP] + L-alanine + H(+) = (8S)-8-amino-7-oxononanoate + holo-[ACP] + CO2. It functions in the pathway cofactor biosynthesis; biotin biosynthesis. Catalyzes the decarboxylative condensation of pimeloyl-[acyl-carrier protein] and L-alanine to produce 8-amino-7-oxononanoate (AON), [acyl-carrier protein], and carbon dioxide. This Burkholderia thailandensis (strain ATCC 700388 / DSM 13276 / CCUG 48851 / CIP 106301 / E264) protein is 8-amino-7-oxononanoate synthase.